The sequence spans 1181 residues: Putative primase (1181 aa).

The disordered stretch occupies residues 1141–1181; that stretch reads RSHSTMVEHDMDDDESTNKKQELEEEDEECIDIDEYNNERF. Residues 1163–1181 are compositionally biased toward acidic residues; that stretch reads LEEEDEECIDIDEYNNERF.

This sequence belongs to the eukaryotic-type primase small subunit family.

In terms of biological role, synthesizes small RNA primers for the Okazaki fragments on both template strands at replication forks during viral DNA synthesis. This is Putative primase from Magallana gigas (Pacific oyster).